Here is a 409-residue protein sequence, read N- to C-terminus: Phosphatidylglycerol--prolipoprotein diacylglyceryl transferase (409 aa).

4 helical membrane passes run 18–38 (PVPLRAYALMIIIGVFVAVFV), 48–68 (MDPMVASEVAYWAVPFGIVGA), 93–113 (IWNGGLGIWGAIAGGAFGAWL), and 119–139 (GISLALFGDAAAPGIILAQAI). Residue Arg-141 participates in a 1,2-diacyl-sn-glycero-3-phospho-(1'-sn-glycerol) binding. A run of 2 helical transmembrane segments spans residues 177 to 197 (QPTFLYECLWNLVVAGILLVV) and 234 to 254 (ILGLRVNIWTSIVVCLGALLA). A disordered region spans residues 273-409 (ALGIARSRPA…AVPPEEPQLP (137 aa)). Low complexity-rich tracts occupy residues 297–309 (AAAPDSAGPDSAA), 320–335 (PDLGGPDPADPGSAGS), and 348–375 (TATTATTATTATTATTATTATTATTATT).

It belongs to the Lgt family.

It is found in the cell membrane. The enzyme catalyses L-cysteinyl-[prolipoprotein] + a 1,2-diacyl-sn-glycero-3-phospho-(1'-sn-glycerol) = an S-1,2-diacyl-sn-glyceryl-L-cysteinyl-[prolipoprotein] + sn-glycerol 1-phosphate + H(+). Its pathway is protein modification; lipoprotein biosynthesis (diacylglyceryl transfer). Catalyzes the transfer of the diacylglyceryl group from phosphatidylglycerol to the sulfhydryl group of the N-terminal cysteine of a prolipoprotein, the first step in the formation of mature lipoproteins. The polypeptide is Phosphatidylglycerol--prolipoprotein diacylglyceryl transferase (Frankia casuarinae (strain DSM 45818 / CECT 9043 / HFP020203 / CcI3)).